The primary structure comprises 181 residues: MSRIGNKEIQVPDSVNVQIQDKNFIVVTGPQGKLEYQFNHKIKILLINTIIKVSRPNNELFMKKIHGTTRALLSNMIEGVEKGFVKRLEIVGLDYKVDLQGDNLILHLGFSHSIKITIPKGIDIEIPKKIKGIHIKGIDKQFVGEFASKIAKLRKPEPYKGKGIRFEGQYVIRKAGKSTKK.

It belongs to the universal ribosomal protein uL6 family. As to quaternary structure, part of the 50S ribosomal subunit.

In terms of biological role, this protein binds to the 23S rRNA, and is important in its secondary structure. It is located near the subunit interface in the base of the L7/L12 stalk, and near the tRNA binding site of the peptidyltransferase center. The polypeptide is Large ribosomal subunit protein uL6 (Phytoplasma mali (strain AT)).